A 420-amino-acid polypeptide reads, in one-letter code: Phosphoglycerate kinase, cytosolic (420 aa).

The (2R)-3-phosphoglycerate site is built by Val23, Asp24, Phe25, Asn26, Arg39, Ser61, His62, Gly64, Arg65, Arg135, His171, and Arg172. ADP is bound by residues Gly217 and Ala218. Gly217 provides a ligand contact to CDP. Residues Ala218 and Lys219 each contribute to the AMP site. ATP is bound at residue Ala218. Ala218 contacts Mg(2+). Lys219 is a binding site for (2R)-3-phosphoglycerate. Asp222 provides a ligand contact to CDP. Residue Asp222 coordinates Mg(2+). Positions 223 and 241 each coordinate ADP. Lys223 lines the AMP pocket. Lys223 lines the ATP pocket. Position 241 (Gly241) interacts with CDP. The AMP site is built by Ala242 and Ala314. The ATP site is built by Ala242 and Ala314. Residues Ala314 and Asn338 each contribute to the ADP site. CDP is bound by residues Gly339 and Phe344. Residues Phe344, Glu345, Glu377, and Ser378 each contribute to the ADP site. Residue Glu345 coordinates AMP. Residues Glu345, Glu377, and Ser378 each contribute to the ATP site. Glu377 is a Mg(2+) binding site.

Belongs to the phosphoglycerate kinase family. In terms of assembly, monomer. The cofactor is Mg(2+).

It localises to the cytoplasm. It carries out the reaction (2R)-3-phosphoglycerate + ATP = (2R)-3-phospho-glyceroyl phosphate + ADP. It functions in the pathway carbohydrate degradation; glycolysis; pyruvate from D-glyceraldehyde 3-phosphate: step 2/5. The polypeptide is Phosphoglycerate kinase, cytosolic (Trypanosoma brucei brucei).